A 314-amino-acid chain; its full sequence is Mycothiol acetyltransferase (314 aa).

Glu39 contributes to the 1D-myo-inositol 2-(L-cysteinylamino)-2-deoxy-alpha-D-glucopyranoside binding site. 80–82 (LTA) contributes to the acetyl-CoA binding site. Residues 159–313 (FVCRRFDPIS…PTGELGHEPP (155 aa)) enclose the N-acetyltransferase domain. 1D-myo-inositol 2-(L-cysteinylamino)-2-deoxy-alpha-D-glucopyranoside-binding residues include Glu186, Lys228, and Glu237. Acetyl-CoA is bound by residues 241–243 (LGV) and 248–254 (QGQGVGR). A 1D-myo-inositol 2-(L-cysteinylamino)-2-deoxy-alpha-D-glucopyranoside-binding site is contributed by Tyr275.

This sequence belongs to the acetyltransferase family. MshD subfamily. Monomer.

It catalyses the reaction 1D-myo-inositol 2-(L-cysteinylamino)-2-deoxy-alpha-D-glucopyranoside + acetyl-CoA = mycothiol + CoA + H(+). Its function is as follows. Catalyzes the transfer of acetyl from acetyl-CoA to desacetylmycothiol (Cys-GlcN-Ins) to form mycothiol. The protein is Mycothiol acetyltransferase of Jonesia denitrificans (strain ATCC 14870 / DSM 20603 / BCRC 15368 / CIP 55.134 / JCM 11481 / NBRC 15587 / NCTC 10816 / Prevot 55134) (Listeria denitrificans).